The following is a 241-amino-acid chain: Copper transport protein CTR3 (241 aa).

The Lumenal portion of the chain corresponds to 1–41 (MNMGGSSSTAAKKATCKISMLWNWYTIDTCFIARSWRNDTK). A helical membrane pass occupies residues 42 to 62 (GKFAGSCIGCFALVVVAQWLT). The Cytoplasmic portion of the chain corresponds to 63-159 (RFSRQFDVEL…SCCTLITPVD (97 aa)). The helical transmembrane segment at 160–180 (LYPTFLDHMIRVTIFVLQWGL) threads the bilayer. The Lumenal segment spans residues 181–182 (SY). A helical membrane pass occupies residues 183–203 (IIMLLFMYYNGYIIISCLIGA). Residues 204–241 (IVGRFIFCYEPLGSLGANGSAQGTVSYDKESDDRKCCL) are Cytoplasmic-facing.

This sequence belongs to the copper transporter (Ctr) (TC 1.A.56) family. SLC31A subfamily.

The protein resides in the cytoplasmic vesicle membrane. Its function is as follows. Required for high affinity copper (probably reduced Cu I) transport into the cell. This is Copper transport protein CTR3 (CTR3) from Saccharomyces cerevisiae (strain ATCC 204508 / S288c) (Baker's yeast).